Here is a 327-residue protein sequence, read N- to C-terminus: Gonadotropin-releasing hormone receptor (327 aa).

Residues 1–38 (MANNASLEQDPNHCSAINNSIPLIQGKLPTLTVSGKIR) lie on the Extracellular side of the membrane. N-linked (GlcNAc...) asparagine glycosylation is found at Asn-4 and Asn-18. The chain crosses the membrane as a helical span at residues 39–58 (VTVTFFLFLLSTAFNASFLL). Over 59–77 (KLQKWTQKRKKGKKLSRMK) the chain is Cytoplasmic. A helical membrane pass occupies residues 78 to 97 (VLLKHLTLANLLETLIVMPL). The Extracellular portion of the chain corresponds to 98–115 (DGMWNITVQWYAGEFLCK). Residue Asn-102 is glycosylated (N-linked (GlcNAc...) asparagine). An intrachain disulfide couples Cys-114 to Cys-195. A helical membrane pass occupies residues 116–137 (VLSYLKLFSMYAPAFMMVVISL). Over 138–164 (DRSLAITQPLAVQSNSKLEQSMISLAW) the chain is Cytoplasmic. A helical transmembrane segment spans residues 165-184 (ILSIVFAGPQLYIFRMIYLA). Over 185-211 (DGSGPTVFSQCVTHCSFPQWWHQAFYN) the chain is Extracellular. Residues 212 to 231 (FFTFGCLFIIPLLIMLICNA) form a helical membrane-spanning segment. Over 232-280 (KIIFALTRVLHQDPRKLQLNQSKNNIPRARLRTLKMTVAFATSFVVCWT) the chain is Cytoplasmic. The helical transmembrane segment at 281–299 (PYYVLGIWYWFDPEMLNRV) threads the bilayer. The Extracellular segment spans residues 300 to 305 (SEPVNH). The helical transmembrane segment at 306-325 (FFFLFAFLNPCFDPLIYGYF) threads the bilayer. The Cytoplasmic portion of the chain corresponds to 326–327 (SL).

It belongs to the G-protein coupled receptor 1 family. In terms of tissue distribution, pituitary gland.

Its subcellular location is the cell membrane. Receptor for gonadotropin releasing hormone (GnRH) that mediates the action of GnRH to stimulate the secretion of the gonadotropic hormones luteinizing hormone (LH) and follicle-stimulating hormone (FSH). This receptor mediates its action by association with G-proteins that activate a phosphatidylinositol-calcium second messenger system. This Mus musculus (Mouse) protein is Gonadotropin-releasing hormone receptor (Gnrhr).